Reading from the N-terminus, the 328-residue chain is Malate dehydrogenase 2 (328 aa).

12–18 is an NAD(+) binding site; the sequence is GAAGQIA. Positions 93 and 99 each coordinate substrate. Residues asparagine 106, glutamine 113, and 130–132 contribute to the NAD(+) site; that span reads VGN. Substrate contacts are provided by asparagine 132 and arginine 163. The active-site Proton acceptor is the histidine 188.

The protein belongs to the LDH/MDH superfamily. MDH type 2 family.

The enzyme catalyses (S)-malate + NAD(+) = oxaloacetate + NADH + H(+). Functionally, catalyzes the reversible oxidation of malate to oxaloacetate. The polypeptide is Malate dehydrogenase 2 (Burkholderia vietnamiensis (strain G4 / LMG 22486) (Burkholderia cepacia (strain R1808))).